Consider the following 230-residue polypeptide: Leucyl/phenylalanyl-tRNA--protein transferase (230 aa).

This sequence belongs to the L/F-transferase family.

It is found in the cytoplasm. It carries out the reaction N-terminal L-lysyl-[protein] + L-leucyl-tRNA(Leu) = N-terminal L-leucyl-L-lysyl-[protein] + tRNA(Leu) + H(+). It catalyses the reaction N-terminal L-arginyl-[protein] + L-leucyl-tRNA(Leu) = N-terminal L-leucyl-L-arginyl-[protein] + tRNA(Leu) + H(+). The enzyme catalyses L-phenylalanyl-tRNA(Phe) + an N-terminal L-alpha-aminoacyl-[protein] = an N-terminal L-phenylalanyl-L-alpha-aminoacyl-[protein] + tRNA(Phe). Functions in the N-end rule pathway of protein degradation where it conjugates Leu, Phe and, less efficiently, Met from aminoacyl-tRNAs to the N-termini of proteins containing an N-terminal arginine or lysine. The sequence is that of Leucyl/phenylalanyl-tRNA--protein transferase from Erwinia tasmaniensis (strain DSM 17950 / CFBP 7177 / CIP 109463 / NCPPB 4357 / Et1/99).